A 249-amino-acid chain; its full sequence is Pyridoxine 5'-phosphate synthase (249 aa).

A 3-amino-2-oxopropyl phosphate-binding site is contributed by Asn7. 9-10 (DH) serves as a coordination point for 1-deoxy-D-xylulose 5-phosphate. Arg18 lines the 3-amino-2-oxopropyl phosphate pocket. His43 acts as the Proton acceptor in catalysis. Residues Arg45 and His50 each coordinate 1-deoxy-D-xylulose 5-phosphate. Catalysis depends on Glu70, which acts as the Proton acceptor. Thr100 is a 1-deoxy-D-xylulose 5-phosphate binding site. His198 acts as the Proton donor in catalysis. 3-amino-2-oxopropyl phosphate-binding positions include Ala199 and 220–221 (GH).

It belongs to the PNP synthase family. Homooctamer; tetramer of dimers.

It is found in the cytoplasm. It carries out the reaction 3-amino-2-oxopropyl phosphate + 1-deoxy-D-xylulose 5-phosphate = pyridoxine 5'-phosphate + phosphate + 2 H2O + H(+). It functions in the pathway cofactor biosynthesis; pyridoxine 5'-phosphate biosynthesis; pyridoxine 5'-phosphate from D-erythrose 4-phosphate: step 5/5. Functionally, catalyzes the complicated ring closure reaction between the two acyclic compounds 1-deoxy-D-xylulose-5-phosphate (DXP) and 3-amino-2-oxopropyl phosphate (1-amino-acetone-3-phosphate or AAP) to form pyridoxine 5'-phosphate (PNP) and inorganic phosphate. This chain is Pyridoxine 5'-phosphate synthase, found in Azoarcus sp. (strain BH72).